Reading from the N-terminus, the 265-residue chain is Phosphatidylglycerol--prolipoprotein diacylglyceryl transferase (265 aa).

A run of 4 helical transmembrane segments spans residues Leu17 to Gly37, Leu56 to Tyr76, Trp92 to Phe112, and Gly117 to Ala137. Residue Arg139 coordinates a 1,2-diacyl-sn-glycero-3-phospho-(1'-sn-glycerol). 3 consecutive transmembrane segments (helical) span residues Pro173–Tyr193, Gly201–Val221, and Trp235–Ala255.

It belongs to the Lgt family.

Its subcellular location is the cell inner membrane. It carries out the reaction L-cysteinyl-[prolipoprotein] + a 1,2-diacyl-sn-glycero-3-phospho-(1'-sn-glycerol) = an S-1,2-diacyl-sn-glyceryl-L-cysteinyl-[prolipoprotein] + sn-glycerol 1-phosphate + H(+). Its pathway is protein modification; lipoprotein biosynthesis (diacylglyceryl transfer). Functionally, catalyzes the transfer of the diacylglyceryl group from phosphatidylglycerol to the sulfhydryl group of the N-terminal cysteine of a prolipoprotein, the first step in the formation of mature lipoproteins. The polypeptide is Phosphatidylglycerol--prolipoprotein diacylglyceryl transferase (Solidesulfovibrio magneticus (strain ATCC 700980 / DSM 13731 / RS-1) (Desulfovibrio magneticus)).